Here is a 414-residue protein sequence, read N- to C-terminus: Multifunctional CCA protein (414 aa).

Positions 8 and 11 each coordinate ATP. Glycine 8 and arginine 11 together coordinate CTP. Mg(2+)-binding residues include aspartate 21 and aspartate 23. Arginine 91, arginine 143, and arginine 146 together coordinate ATP. 3 residues coordinate CTP: arginine 91, arginine 143, and arginine 146. In terms of domain architecture, HD spans 232–333; the sequence is TGVHVMMVID…TRLVERCDAL (102 aa).

This sequence belongs to the tRNA nucleotidyltransferase/poly(A) polymerase family. Bacterial CCA-adding enzyme type 1 subfamily. In terms of assembly, monomer. Can also form homodimers and oligomers. It depends on Mg(2+) as a cofactor. Ni(2+) serves as cofactor.

It catalyses the reaction a tRNA precursor + 2 CTP + ATP = a tRNA with a 3' CCA end + 3 diphosphate. It carries out the reaction a tRNA with a 3' CCA end + 2 CTP + ATP = a tRNA with a 3' CCACCA end + 3 diphosphate. Catalyzes the addition and repair of the essential 3'-terminal CCA sequence in tRNAs without using a nucleic acid template. Adds these three nucleotides in the order of C, C, and A to the tRNA nucleotide-73, using CTP and ATP as substrates and producing inorganic pyrophosphate. tRNA 3'-terminal CCA addition is required both for tRNA processing and repair. Also involved in tRNA surveillance by mediating tandem CCA addition to generate a CCACCA at the 3' terminus of unstable tRNAs. While stable tRNAs receive only 3'-terminal CCA, unstable tRNAs are marked with CCACCA and rapidly degraded. This Cupriavidus metallidurans (strain ATCC 43123 / DSM 2839 / NBRC 102507 / CH34) (Ralstonia metallidurans) protein is Multifunctional CCA protein.